Here is a 722-residue protein sequence, read N- to C-terminus: MKGNFRKRDSSTNSRKGGNSDSNYTNGGVPNQNNSSMFYENPEITRNFDDRQDYLLANSIGSDVTVTVTSGVKYTGLLVSCNLESTNGIDVVLRFPRVADSGVSDSVDDLAKTLGETLLIHGEDVAELELKNIDLSLDEKWENSKAQETTPARTNIEKERVNGESNEVTKFRTDVDISGSGREIKERKLEKWTPEEGAEHFDINKGKALEDDSASWDQFAVNEKKFGVKSTFDEHLYTTKINKDDPNYSKRLQEAERIAKEIESQGTSGNIHIAEDRGIIIDDSGLDEEDLYSGVDRRGDELLAALKSNSKPNSNKGNRYVPPTLRQQPHHMDPAIISSSNSNKNENAVSTDTSTPAAAGAPEGKPPQKTSKNKKSLSSKEAQIEELKKFSEKFKVPYDIPKDMLEVLKRSSSTLKSNSSLPPKPISKTPSAKTVSPTTQISAGKSESRRSGSNISQGQSSTGHTTRSSTSLRRRNHGSFFGAKNPHTNDAKRVLFGKSFNMFIKSKEAHDEKKKGDDASENMEPFFIEKPYFTAPTWLNTIEESYKTFFPDEDTAIQEAQTRFQQRQLNSMGNAVPGMNPAMGMNMGGMMGFPMGGPSASPNPMMNGFAAGSMGMYMPFQPQPMFYHPSMPQMMPVMGSNGAEEGGGNISPHVPAGFMAAGPGAPMGAFGYPGGIPFQGMMGSGPSGMPANGSAMHSHGHSRNYHQTSHHGHHNSSTSGHK.

Basic and acidic residues predominate over residues 1 to 10 (MKGNFRKRDS). The interval 1–38 (MKGNFRKRDSSTNSRKGGNSDSNYTNGGVPNQNNSSMF) is disordered. Positions 11-38 (STNSRKGGNSDSNYTNGGVPNQNNSSMF) are enriched in polar residues. Residues 51-107 (RQDYLLANSIGSDVTVTVTSGVKYTGLLVSCNLESTNGIDVVLRFPRVADSGVSDSV) form the Sm domain. At Ser-106 the chain carries Phosphoserine. A Phosphothreonine modification is found at Thr-193. A Phosphoserine modification is found at Ser-215. 3 disordered regions span residues 305-380 (ALKS…LSSK), 412-488 (SSTL…NPHT), and 683-722 (GSGP…SGHK). 4 stretches are compositionally biased toward low complexity: residues 307–316 (KSNSKPNSNK), 338–347 (SSSNSNKNEN), 356–370 (PAAA…PQKT), and 412–421 (SSTLKSNSSL). Residue Lys-344 forms a Glycyl lysine isopeptide (Lys-Gly) (interchain with G-Cter in ubiquitin) linkage. Residues 429-455 (TPSAKTVSPTTQISAGKSESRRSGSNI) are compositionally biased toward polar residues. Ser-436 carries the post-translational modification Phosphoserine. The segment covering 456–471 (SQGQSSTGHTTRSSTS) has biased composition (low complexity). A compositionally biased stretch (basic residues) spans 698 to 722 (SHGHSRNYHQTSHHGHHNSSTSGHK).

This sequence belongs to the ataxin-2 family. As to quaternary structure, interacts (via C-terminus) with MKT1 (via C-terminus). Interacts with FIR1, IGO1, LSM12, PBP4 and PAB1.

Its subcellular location is the cytoplasm. The protein resides in the nucleus. It is found in the mitochondrion. Functionally, involved in pre-mRNA polyadenylation. May act to repress the ability of PAB1 to negatively regulate polyadenylation. Negative regulator of poly(A) nuclease (PAN) activity. Promotes mating-type switching in mother cells by positively regulating HO mRNA translation. Localizes MKT1 to polysomes. The sequence is that of PAB1-binding protein 1 (PBP1) from Saccharomyces cerevisiae (strain ATCC 204508 / S288c) (Baker's yeast).